Here is a 390-residue protein sequence, read N- to C-terminus: tRNA(Met) cytidine acetate ligase (390 aa).

Residues 7 to 20 (VVEY…HKLH), glycine 101, asparagine 162, and arginine 187 contribute to the ATP site.

It belongs to the TmcAL family.

It is found in the cytoplasm. The catalysed reaction is cytidine(34) in elongator tRNA(Met) + acetate + ATP = N(4)-acetylcytidine(34) in elongator tRNA(Met) + AMP + diphosphate. Catalyzes the formation of N(4)-acetylcytidine (ac(4)C) at the wobble position of elongator tRNA(Met), using acetate and ATP as substrates. First activates an acetate ion to form acetyladenylate (Ac-AMP) and then transfers the acetyl group to tRNA to form ac(4)C34. The polypeptide is tRNA(Met) cytidine acetate ligase (Listeria monocytogenes serotype 4b (strain CLIP80459)).